The following is a 343-amino-acid chain: MLAARLSRPLSQLPGKALSVRDRENGTRHTLLFYPASFSPDTRRTYASQADAASGKAILITGCDSGFGFSLAKHLHSKGFLVFAGCLMKDKGDAGVKELDSLKSDRLRTIQLNVCNSEEVEKAVETIRSGLKDPEKGMWGLVNNAGISTFGEVEFTSMETYKEVAEVNLWGTVRTTKSFLPLLRRAKGRVVNISSMLGRMANPARSPYCITKFGIEAFSDCLRYEMHPLGVKVSVVEPGNFIAATSLYSPERIQAIAKKMWDDLPEVVRKDYGRKYFDEKIAKMETYCNSGSTDTSSVINAVTHALTAATPYTRYHPMDYYWWLRMQIMTHFPGAISDKIYIH.

Residues 1–46 (MLAARLSRPLSQLPGKALSVRDRENGTRHTLLFYPASFSPDTRRTY) constitute a mitochondrion transit peptide. 60–84 (ITGCDSGFGFSLAKHLHSKGFLVFA) lines the NAD(+) pocket. An N6-acetyllysine mark is found at Lys73 and Lys97. Lys103 bears the N6-acetyllysine; alternate mark. At Lys103 the chain carries N6-succinyllysine; alternate. Lys132 and Lys177 each carry N6-acetyllysine. Residue Met196 participates in substrate binding. Cys209 functions as the Proton acceptor in the catalytic mechanism. Lys212 is subject to N6-acetyllysine. Ser219 is a glycosylation site (O-linked (GlcNAc) serine). Ser246 carries the phosphoserine modification. Position 258 is an N6-acetyllysine (Lys258). An N6-acetyllysine; alternate modification is found at Lys259. Lys259 carries the N6-succinyllysine; alternate modification. Lys280 carries the post-translational modification N6-acetyllysine.

This sequence belongs to the short-chain dehydrogenases/reductases (SDR) family. In terms of assembly, homotetramer. Acetylation of Lys-132 is observed in liver mitochondria from fasted mice but not from fed mice.

It localises to the mitochondrion inner membrane. Its subcellular location is the mitochondrion matrix. The catalysed reaction is (R)-3-hydroxybutanoate + NAD(+) = acetoacetate + NADH + H(+). Requires phosphatidylcholine as an allosteric activator for enzymatic activity. The chain is D-beta-hydroxybutyrate dehydrogenase, mitochondrial from Mus musculus (Mouse).